The following is a 452-amino-acid chain: Coproporphyrinogen III oxidase (452 aa).

Residues 10–15 (GGGISG), 36–37 (EP), 58–61 (GAEA), Val-242, Trp-390, and 426–428 (IGV) contribute to the FAD site.

It belongs to the protoporphyrinogen/coproporphyrinogen oxidase family. Coproporphyrinogen III oxidase subfamily. FAD is required as a cofactor.

Its subcellular location is the cytoplasm. The enzyme catalyses coproporphyrinogen III + 3 O2 = coproporphyrin III + 3 H2O2. The protein operates within porphyrin-containing compound metabolism; protoheme biosynthesis. Its function is as follows. Involved in coproporphyrin-dependent heme b biosynthesis. Catalyzes the oxidation of coproporphyrinogen III to coproporphyrin III. This is Coproporphyrinogen III oxidase from Mycobacterium bovis (strain ATCC BAA-935 / AF2122/97).